The following is a 506-amino-acid chain: Cobyric acid synthase (506 aa).

The 198-residue stretch at 251–448 (DITIAIVQLP…LHGLFDSDAF (198 aa)) folds into the GATase cobBQ-type domain. Cys-332 functions as the Nucleophile in the catalytic mechanism. Residue His-440 is part of the active site.

It belongs to the CobB/CobQ family. CobQ subfamily.

It functions in the pathway cofactor biosynthesis; adenosylcobalamin biosynthesis. Functionally, catalyzes amidations at positions B, D, E, and G on adenosylcobyrinic A,C-diamide. NH(2) groups are provided by glutamine, and one molecule of ATP is hydrogenolyzed for each amidation. In Salmonella dublin (strain CT_02021853), this protein is Cobyric acid synthase.